Reading from the N-terminus, the 83-residue chain is uncharacterized protein (83 aa).

The chain crosses the membrane as a helical span at residues 55–75; that stretch reads FGIGAAGVLGSFVTGLLIGWV.

Its subcellular location is the host membrane. In terms of biological role, may play a role in phage assembly. This is an uncharacterized protein from Pseudomonas phage Pf1 (Bacteriophage Pf1).